Here is a 455-residue protein sequence, read N- to C-terminus: Ribulose bisphosphate carboxylase large chain (455 aa).

K5 carries the N6,N6,N6-trimethyllysine modification. 2 residues coordinate substrate: N114 and T164. The active-site Proton acceptor is the K166. K168 contributes to the substrate binding site. Mg(2+) is bound by residues K192, D194, and E195. Position 192 is an N6-carboxylysine (K192). H285 (proton acceptor) is an active-site residue. Residues R286, H318, and S370 each coordinate substrate.

This sequence belongs to the RuBisCO large chain family. Type I subfamily. In terms of assembly, heterohexadecamer of 8 large chains and 8 small chains. Mg(2+) serves as cofactor.

The protein resides in the plastid. Its subcellular location is the chloroplast. The enzyme catalyses 2 (2R)-3-phosphoglycerate + 2 H(+) = D-ribulose 1,5-bisphosphate + CO2 + H2O. It carries out the reaction D-ribulose 1,5-bisphosphate + O2 = 2-phosphoglycolate + (2R)-3-phosphoglycerate + 2 H(+). RuBisCO catalyzes two reactions: the carboxylation of D-ribulose 1,5-bisphosphate, the primary event in carbon dioxide fixation, as well as the oxidative fragmentation of the pentose substrate in the photorespiration process. Both reactions occur simultaneously and in competition at the same active site. The polypeptide is Ribulose bisphosphate carboxylase large chain (Tamarindus indica (Tamarind)).